The chain runs to 428 residues: Light-independent protochlorophyllide reductase subunit N (428 aa).

3 residues coordinate [4Fe-4S] cluster: Cys31, Cys56, and Cys117.

The protein belongs to the BchN/ChlN family. Protochlorophyllide reductase is composed of three subunits; BchL, BchN and BchB. Forms a heterotetramer of two BchB and two BchN subunits. [4Fe-4S] cluster serves as cofactor.

The catalysed reaction is chlorophyllide a + oxidized 2[4Fe-4S]-[ferredoxin] + 2 ADP + 2 phosphate = protochlorophyllide a + reduced 2[4Fe-4S]-[ferredoxin] + 2 ATP + 2 H2O. It participates in porphyrin-containing compound metabolism; bacteriochlorophyll biosynthesis (light-independent). Component of the dark-operative protochlorophyllide reductase (DPOR) that uses Mg-ATP and reduced ferredoxin to reduce ring D of protochlorophyllide (Pchlide) to form chlorophyllide a (Chlide). This reaction is light-independent. The NB-protein (BchN-BchB) is the catalytic component of the complex. The polypeptide is Light-independent protochlorophyllide reductase subunit N (Rhodopseudomonas palustris (strain BisB5)).